A 187-amino-acid chain; its full sequence is MEVFMVSFTLLLGESTFSLGEGFGINTNVFETNIINLSVVLGLVFTLGRNFLISLLDARKETILRNFREADQRAKDAEARLNLAKTELELAEKSAMEIKKQSVLSAELEKKNKNTKIEADTARFKQTQQETLTVQRQRAISKISKQVVNSAITQVKQKLKSSLDSRVQTVINNYKIHKFIEYKPPGN.

A helical membrane pass occupies residues 34–56; that stretch reads IINLSVVLGLVFTLGRNFLISLL.

This sequence belongs to the ATPase B chain family. F-type ATPases have 2 components, F(1) - the catalytic core - and F(0) - the membrane proton channel. F(1) has five subunits: alpha(3), beta(3), gamma(1), delta(1), epsilon(1). F(0) has four main subunits: a(1), b(1), b'(1) and c(10-14). The alpha and beta chains form an alternating ring which encloses part of the gamma chain. F(1) is attached to F(0) by a central stalk formed by the gamma and epsilon chains, while a peripheral stalk is formed by the delta, b and b' chains.

The protein localises to the plastid. It localises to the chloroplast thylakoid membrane. F(1)F(0) ATP synthase produces ATP from ADP in the presence of a proton or sodium gradient. F-type ATPases consist of two structural domains, F(1) containing the extramembraneous catalytic core and F(0) containing the membrane proton channel, linked together by a central stalk and a peripheral stalk. During catalysis, ATP synthesis in the catalytic domain of F(1) is coupled via a rotary mechanism of the central stalk subunits to proton translocation. Functionally, component of the F(0) channel, it forms part of the peripheral stalk, linking F(1) to F(0). This chain is ATP synthase subunit b, chloroplastic, found in Pleurastrum terricola (Filamentous green alga).